A 323-amino-acid polypeptide reads, in one-letter code: Peroxisome biogenesis protein 20 (323 aa).

Cys-8 is covalently cross-linked (Glycyl cysteine thioester (Cys-Gly) (interchain with G-Cter in ubiquitin)). Residue Lys-19 forms a Glycyl lysine isopeptide (Lys-Gly) (interchain with G-Cter in ubiquitin) linkage. Short sequence motifs (wxxxF/Y motif) lie at residues 89-93 (WSSEF), 102-105 (WVED), and 141-145 (WTQEF).

It belongs to the peroxisomal targeting signal receptor family. Interacts (via WxxxF/Y and LVxEF motifs) with PEX14; promoting translocation through the PEX13-PEX14 docking complex. Interacts with PEX7. Monoubiquitinated at Cys-8 by PEX2 during PEX20 passage through the PEX2-PEX10-PEX12 retrotranslocation channel: monoubiquitination acts as a signal for PEX20 extraction and is required for proper export from peroxisomes and recycling. When PEX5 recycling is compromised, polyubiquitinated at Lys-19 by PEX10 during its passage through the retrotranslocation channel, leading to its degradation.

The protein resides in the cytoplasm. Its subcellular location is the cytosol. It localises to the peroxisome matrix. Its function is as follows. Coreceptor required for the peroxisomal import of proteins containing a C-terminal PTS2-type peroxisomal targeting signal, such as 3-oxoacyl-CoA thiolase. Acts via its interaction with PEX7, promoting association between PEX7 bound to cargo proteins and the PEX13-PEX14 docking complex. PEX20 along with PEX7 and PTS2-containing cargo proteins are tranlocated into peroxisomes by passing through the PEX13-PEX14 docking complex. PEX20 coreceptor is then retrotranslocated into the cytosol, leading to release of bound cargo in the peroxisome matrix, and reset for a subsequent peroxisome import cycle. Also mediates peroxisomal import of proteins that do not contain PTS1- or PTS2-type peroxisomal targeting signals, such as acyl-CoA oxidases (Aox) izozymes. Import of acyl-CoA oxidases (Aox) izozymes is independent of PEX7. Required for PEX7 ubiquitination. In Komagataella pastoris (Yeast), this protein is Peroxisome biogenesis protein 20.